Consider the following 174-residue polypeptide: Ribosome maturation factor RimP (174 aa).

The protein belongs to the RimP family.

The protein localises to the cytoplasm. Functionally, required for maturation of 30S ribosomal subunits. This is Ribosome maturation factor RimP from Acinetobacter baumannii (strain AB307-0294).